A 260-amino-acid chain; its full sequence is Lysine/arginine/ornithine-binding periplasmic protein (260 aa).

The first 22 residues, 1 to 22 (MKKSILALSLLVGLSTAASSYA), serve as a signal peptide directing secretion. An L-arginine-binding site is contributed by aspartate 33. Aspartate 33 is an L-lysine binding site. Residue aspartate 33 coordinates L-ornithine. Residues cysteine 60 and cysteine 67 are joined by a disulfide bond. L-arginine-binding residues include serine 91, serine 92, serine 94, arginine 99, threonine 143, and aspartate 183. 6 residues coordinate L-ornithine: serine 91, serine 92, serine 94, arginine 99, threonine 143, and aspartate 183. 4 residues coordinate L-lysine: serine 92, serine 94, arginine 99, and threonine 143.

The protein belongs to the bacterial solute-binding protein 3 family. In terms of assembly, the complex is composed of two ATP-binding proteins (HisP), two transmembrane proteins (HisM and HisQ) and a solute-binding protein (ArgT).

It localises to the periplasm. In terms of biological role, part of the ABC transporter complex HisPMQ-ArgT involved in lysine/arginine/ornithine transport. Binds lysine, arginine and ornithine. Stimulates ATPase activity of HisP. In Escherichia coli (strain K12), this protein is Lysine/arginine/ornithine-binding periplasmic protein (argT).